The sequence spans 61 residues: Truncated Cytokine response-modifying protein B (61 aa).

The protein is truncated in this strain and presumably inactive. It has similarities with variola virus CrmB, but the product is inactivated due to several premature stop codon. The protein is Truncated Cytokine response-modifying protein B of Bos taurus (Bovine).